Consider the following 430-residue polypeptide: tRNA(Ile)-lysidine synthase (430 aa).

Position 21–26 (21–26) interacts with ATP; sequence SGGLDS.

It belongs to the tRNA(Ile)-lysidine synthase family.

The protein resides in the cytoplasm. It carries out the reaction cytidine(34) in tRNA(Ile2) + L-lysine + ATP = lysidine(34) in tRNA(Ile2) + AMP + diphosphate + H(+). Functionally, ligates lysine onto the cytidine present at position 34 of the AUA codon-specific tRNA(Ile) that contains the anticodon CAU, in an ATP-dependent manner. Cytidine is converted to lysidine, thus changing the amino acid specificity of the tRNA from methionine to isoleucine. The polypeptide is tRNA(Ile)-lysidine synthase (Salmonella dublin (strain CT_02021853)).